A 428-amino-acid polypeptide reads, in one-letter code: Adenylosuccinate synthetase (428 aa).

GTP contacts are provided by residues 11–17 (GDEGKGK) and 39–41 (GHT). Catalysis depends on Asp-12, which acts as the Proton acceptor. Mg(2+) is bound by residues Asp-12 and Gly-39. IMP is bound by residues 12–15 (DEGK), 37–40 (NAGH), Thr-130, Arg-144, Asn-226, Thr-241, and Arg-305. His-40 functions as the Proton donor in the catalytic mechanism. 301–307 (VTTGRKR) is a binding site for substrate. GTP contacts are provided by residues Arg-307, 333-335 (KLD), and 415-417 (GTG).

It belongs to the adenylosuccinate synthetase family. As to quaternary structure, homodimer. Mg(2+) is required as a cofactor.

The protein resides in the cytoplasm. It catalyses the reaction IMP + L-aspartate + GTP = N(6)-(1,2-dicarboxyethyl)-AMP + GDP + phosphate + 2 H(+). It functions in the pathway purine metabolism; AMP biosynthesis via de novo pathway; AMP from IMP: step 1/2. Plays an important role in the de novo pathway and in the salvage pathway of purine nucleotide biosynthesis. Catalyzes the first committed step in the biosynthesis of AMP from IMP. The polypeptide is Adenylosuccinate synthetase (Candida tropicalis (strain ATCC MYA-3404 / T1) (Yeast)).